A 331-amino-acid polypeptide reads, in one-letter code: Mitochondrial glycine transporter (331 aa).

Solcar repeat units lie at residues 19–103, 132–216, and 234–318; these read SRTT…LRQG, LSNW…LKRR, and SSSS…LILR. Transmembrane regions (helical) follow at residues 25–50, 78–104, 138–163, 191–214, 238–264, and 293–311; these read FAAG…TRVQ, GTLP…RQGL, LATG…VRYE, GFGA…EQLK, INFV…KTRL, and GLGL…AWTV.

This sequence belongs to the mitochondrial carrier (TC 2.A.29) family. SLC25A38 subfamily.

It is found in the mitochondrion inner membrane. It catalyses the reaction glycine(in) = glycine(out). Its function is as follows. Mitochondrial glycine transporter that imports glycine into the mitochondrial matrix. Plays an important role in providing glycine for the first enzymatic step in heme biosynthesis, the condensation of glycine with succinyl-CoA to produce 5-aminolevulinate (ALA) in the mitochondrial matrix. The sequence is that of Mitochondrial glycine transporter from Neosartorya fischeri (strain ATCC 1020 / DSM 3700 / CBS 544.65 / FGSC A1164 / JCM 1740 / NRRL 181 / WB 181) (Aspergillus fischerianus).